Here is a 514-residue protein sequence, read N- to C-terminus: ATP synthase subunit alpha 2 (514 aa).

Glycine 170 to threonine 177 contacts ATP.

It belongs to the ATPase alpha/beta chains family. F-type ATPases have 2 components, CF(1) - the catalytic core - and CF(0) - the membrane proton channel. CF(1) has five subunits: alpha(3), beta(3), gamma(1), delta(1), epsilon(1). CF(0) has three main subunits: a(1), b(2) and c(9-12). The alpha and beta chains form an alternating ring which encloses part of the gamma chain. CF(1) is attached to CF(0) by a central stalk formed by the gamma and epsilon chains, while a peripheral stalk is formed by the delta and b chains.

The protein resides in the cell inner membrane. The catalysed reaction is ATP + H2O + 4 H(+)(in) = ADP + phosphate + 5 H(+)(out). Produces ATP from ADP in the presence of a proton gradient across the membrane. The alpha chain is a regulatory subunit. This chain is ATP synthase subunit alpha 2, found in Hahella chejuensis (strain KCTC 2396).